A 228-amino-acid chain; its full sequence is Cutinase (228 aa).

Residues 1–16 form the signal peptide; sequence MKFLSIISLAVSLVAA. Cys-49 and Cys-129 form a disulfide bridge. Ser-140 serves as the catalytic Nucleophile. A disulfide bridge connects residues Cys-191 and Cys-198. Asp-195 is a catalytic residue. His-208 functions as the Proton donor/acceptor in the catalytic mechanism.

The protein belongs to the cutinase family. The 2 disulfide bonds play a critical role in holding the catalytic residues in juxta-position; reduction of the disulfide bridges results in the complete inactivation of the enzyme.

The protein localises to the secreted. The catalysed reaction is cutin + H2O = cutin monomers.. Its activity is regulated as follows. Partially inhibited by berberine; higher inhibitory effects are observed with longer chain polyester substrates. Its function is as follows. Catalyzes the hydrolysis of complex carboxylic polyesters found in the cell wall of plants. Degrades cutin, a macromolecule that forms the structure of the plant cuticle. Allows pathogenic fungi to penetrate through the cuticular barrier into the host plant during the initial stage of fungal infection. The chain is Cutinase (CUTA) from Colletotrichum truncatum (Anthracnose fungus).